The primary structure comprises 272 residues: Shikimate dehydrogenase (NADP(+)) (272 aa).

Shikimate is bound by residues 14 to 16 (SKS) and Thr-61. Lys-65 (proton acceptor) is an active-site residue. Glu-77 contacts NADP(+). Shikimate contacts are provided by Asn-86 and Asp-102. NADP(+)-binding positions include 126 to 130 (GAGGA), 149 to 154 (NRTVSR), and Met-213. Tyr-215 is a shikimate binding site. Gly-237 contributes to the NADP(+) binding site.

Belongs to the shikimate dehydrogenase family. In terms of assembly, homodimer.

It carries out the reaction shikimate + NADP(+) = 3-dehydroshikimate + NADPH + H(+). It participates in metabolic intermediate biosynthesis; chorismate biosynthesis; chorismate from D-erythrose 4-phosphate and phosphoenolpyruvate: step 4/7. Functionally, involved in the biosynthesis of the chorismate, which leads to the biosynthesis of aromatic amino acids. Catalyzes the reversible NADPH linked reduction of 3-dehydroshikimate (DHSA) to yield shikimate (SA). The chain is Shikimate dehydrogenase (NADP(+)) from Shigella sonnei (strain Ss046).